The chain runs to 569 residues: F-box/WD repeat-containing protein 5 (569 aa).

Residues 3 to 49 enclose the F-box domain; sequence EGGMPLLPDSLVYQIFLSLGPADVLAAGLVCRQWQAVSRDEFLWREQ. Residues 90–129 form a WD 1 repeat; it reads EHTDQVLHLSFSHSGYQFASCSKDCTVKIWNNDLTISLLH. Phosphoserine; by PLK4 is present on Ser151. The short motif at 308 to 316 is the D-box element; the sequence is RRVFDSVLD. 2 WD repeats span residues 470–509 and 511–551; these read TPND…CLAK and RHED…RVLQ.

Belongs to the FBXW5 family. Part of the SCF (SKP1-CUL1-F-box) E3 ubiquitin-protein ligase complex SCF(FBXW5) composed of CUL1, SKP1, RBX1 and FBXW5. Component of the DCX(FBXW5) E3 ubiquitin ligase complex, at least composed of (CUL4A or CUL4B), DDB1, FBXW5 and RBX1. Interacts with CDC20, EPS8, TSC1, TSC2 and SASS6. Interacts with TNFAIP8L1; TNFAIP8L1 competes with TSC2 to bind FBXW5 increasing TSC2 stability by preventing its ubiquitination. Post-translationally, phosphorylated at Ser-151 by PLK4 during the G1/S transition, leading to inhibit its ability to ubiquitinate SASS6. Ubiquitinated and degraded by the APC/C complex during mitosis and G1 phase.

It localises to the cytoplasm. It functions in the pathway protein modification; protein ubiquitination. Its function is as follows. Substrate recognition component of both SCF (SKP1-CUL1-F-box protein) and DCX (DDB1-CUL4-X-box) E3 ubiquitin-protein ligase complexes. Substrate recognition component of the SCF(FBXW5) E3 ubiquitin-protein ligase complex which mediates the ubiquitination and subsequent proteasomal degradation of SASS6 during S phase, leading to prevent centriole reduplication. The SCF(FBXW5) complex also mediates ubiquitination and degradation of actin-regulator EPS8 during G2 phase, leading to the transient degradation of EPS8 and subsequent cell shape changes required to allow mitotic progression. Substrate-specific adapter of the DCX(FBXW5) E3 ubiquitin-protein ligase complex which mediates the polyubiquitination and subsequent degradation of TSC2. May also act as a negative regulator of MAP3K7/TAK1 signaling in the interleukin-1B (IL1B) signaling pathway. This chain is F-box/WD repeat-containing protein 5 (Fbxw5), found in Rattus norvegicus (Rat).